The primary structure comprises 969 residues: Squamosa promoter-binding-like protein 6 (969 aa).

Disordered regions lie at residues 1-25 (MEAARVGAQSRHLYGGGLGEPDMDR) and 54-81 (EASGLALNSSPSSSEEAGAASVRNVNAR). Low complexity predominate over residues 55 to 74 (ASGLALNSSPSSSEEAGAAS). The segment at 149 to 226 (GPACQVEGCT…AGHNRRRRKT (78 aa)) adopts an SBP-type zinc-finger fold. Cys-152, Cys-157, Cys-174, His-177, Cys-193, Cys-196, His-200, and Cys-212 together coordinate Zn(2+). Positions 209 to 225 (KRSCRRRLAGHNRRRRK) match the Bipartite nuclear localization signal motif. The interval 377–434 (GMEGFEDGYEGSPTPAFKTTDSPNCPSWMHQDSTQSPPQTSGNSDSTSAQSLSSSNGD) is disordered. Residues 393–419 (FKTTDSPNCPSWMHQDSTQSPPQTSGN) are compositionally biased toward polar residues. Residues 420–431 (SDSTSAQSLSSS) show a composition bias toward low complexity.

In terms of tissue distribution, ubiquitous.

The protein resides in the nucleus. In terms of biological role, trans-acting factor that binds specifically to the consensus nucleotide sequence 5'-TNCGTACAA-3'. This chain is Squamosa promoter-binding-like protein 6 (SPL6), found in Oryza sativa subsp. japonica (Rice).